The following is a 303-amino-acid chain: Taste receptor type 2 member 13 (303 aa).

The Extracellular portion of the chain corresponds to Met1–Ser7. The chain crosses the membrane as a helical span at residues Ile8–Val28. Residues Leu29–Arg55 are Cytoplasmic-facing. Residues Ile56 to Phe76 traverse the membrane as a helical segment. The Extracellular segment spans residues Val77 to Met85. The helical transmembrane segment at Ile86–Phe106 threads the bilayer. Over Tyr107–Lys128 the chain is Cytoplasmic. The helical transmembrane segment at Val129–Asn149 threads the bilayer. Residues Met150 to Thr184 lie on the Extracellular side of the membrane. N-linked (GlcNAc...) asparagine glycosylation is found at Asn162 and Asn166. Residues Met185–Leu205 form a helical membrane-spanning segment. At Gln206 to Lys232 the chain is on the cytoplasmic side. A helical membrane pass occupies residues Ile233 to Ile253. Over Ser254–Val261 the chain is Extracellular. A helical membrane pass occupies residues Ile262–Ile282. The Cytoplasmic segment spans residues Leu283–Arg303.

This sequence belongs to the G-protein coupled receptor T2R family.

It localises to the membrane. Functionally, receptor that may play a role in the perception of bitterness and is gustducin-linked. May play a role in sensing the chemical composition of the gastrointestinal content. The activity of this receptor may stimulate alpha gustducin, mediate PLC-beta-2 activation and lead to the gating of TRPM5. The polypeptide is Taste receptor type 2 member 13 (TAS2R13) (Pan paniscus (Pygmy chimpanzee)).